A 261-amino-acid chain; its full sequence is Troponin T, slow skeletal muscle (261 aa).

The segment covering 1 to 30 has biased composition (acidic residues); the sequence is MSDTEEQEYEEEQAEDEEAVEEEAPEEPEP. 2 disordered regions span residues 1-61 and 108-152; these read MSDT…ERVD and ERAE…KKKV. Serine 2 is subject to Phosphoserine; by CK2. Residues 31–40 show a composition bias toward basic and acidic residues; that stretch reads VAEREEERPK. Positions 42 to 54 are enriched in pro residues; it reads SRPVVPPLIPPKI. A compositionally biased stretch (basic and acidic residues) spans 108 to 148; the sequence is ERAEQQRFRTEKERERQAKLAEEKMRKEEEEAKKRAEDDAK.

Belongs to the troponin T family. Interacts with TPM3. As to expression, expressed in soleus muscle. Isoform 4 is predominantly expressed in fast muscles.

Functionally, troponin T is the tropomyosin-binding subunit of troponin, the thin filament regulatory complex which confers calcium-sensitivity to striated muscle actomyosin ATPase activity. This is Troponin T, slow skeletal muscle (Tnnt1) from Rattus norvegicus (Rat).